Reading from the N-terminus, the 159-residue chain is NADH-quinone oxidoreductase subunit B (159 aa).

The [4Fe-4S] cluster site is built by Cys36, Cys37, Cys102, and Cys132.

It belongs to the complex I 20 kDa subunit family. NDH-1 is composed of 14 different subunits. Subunits NuoB, C, D, E, F, and G constitute the peripheral sector of the complex. [4Fe-4S] cluster serves as cofactor.

The protein localises to the cell inner membrane. The enzyme catalyses a quinone + NADH + 5 H(+)(in) = a quinol + NAD(+) + 4 H(+)(out). NDH-1 shuttles electrons from NADH, via FMN and iron-sulfur (Fe-S) centers, to quinones in the respiratory chain. Couples the redox reaction to proton translocation (for every two electrons transferred, four hydrogen ions are translocated across the cytoplasmic membrane), and thus conserves the redox energy in a proton gradient. This Verminephrobacter eiseniae (strain EF01-2) protein is NADH-quinone oxidoreductase subunit B.